The sequence spans 152 residues: Protein-export protein SecB (152 aa).

It belongs to the SecB family. As to quaternary structure, homotetramer, a dimer of dimers. One homotetramer interacts with 1 SecA dimer.

It is found in the cytoplasm. One of the proteins required for the normal export of preproteins out of the cell cytoplasm. It is a molecular chaperone that binds to a subset of precursor proteins, maintaining them in a translocation-competent state. It also specifically binds to its receptor SecA. The polypeptide is Protein-export protein SecB (Dechloromonas aromatica (strain RCB)).